Reading from the N-terminus, the 173-residue chain is Membrane-bound hydrogenase subunit beta (173 aa).

Belongs to the complex I 30 kDa subunit family. In terms of assembly, the membrane-bound hydrogenase complex is composed of MbhK and MbhL, and may also contain MbhJ. Requires Ni(2+) as cofactor.

It is found in the cell membrane. The enzyme catalyses H2 + 2 oxidized [2Fe-2S]-[ferredoxin] = 2 reduced [2Fe-2S]-[ferredoxin] + 2 H(+). With respect to regulation, inhibited by 0.1 mM Cu(2+). Its function is as follows. Beta subunit of a hydrogen-evolving hydrogenase that utilizes protons both as a substrate for hydrogen production and proton translocation. Acts by coupling the redox reaction via ferredoxin and iron-sulfur (Fe-S) clusters to proton translocation across the membrane thereby conserving the redox energy in a proton gradient. The polypeptide is Membrane-bound hydrogenase subunit beta (Pyrococcus furiosus (strain ATCC 43587 / DSM 3638 / JCM 8422 / Vc1)).